The primary structure comprises 488 residues: Type II restriction enzyme HgaI (488 aa).

The catalysed reaction is Endonucleolytic cleavage of DNA to give specific double-stranded fragments with terminal 5'-phosphates.. An S subtype restriction enzyme that recognizes the double-stranded sequences 5'-GACGC-3' and 5'-GCGTC-3' and cleaves respectively 10 bases after G-1 and 10 bases before G'-1. This Avibacterium volantium (Pasteurella volantium) protein is Type II restriction enzyme HgaI (hgaIR).